A 292-amino-acid polypeptide reads, in one-letter code: Chronophin (292 aa).

Asp-25 serves as the catalytic Nucleophile. Asp-25 and Asp-27 together coordinate Mg(2+). The active-site Proton donor is Asp-27. Substrate-binding positions include Ser-58 to Asn-60, His-178, and Lys-209. Mg(2+) is bound at residue Asp-234.

This sequence belongs to the HAD-like hydrolase superfamily. Homodimer. Mg(2+) is required as a cofactor. In terms of tissue distribution, ubiquitous. highly expressed in brain (at protein level).

The protein localises to the cytoplasm. The protein resides in the cytosol. It is found in the cytoskeleton. Its subcellular location is the cell projection. It localises to the ruffle membrane. The protein localises to the lamellipodium membrane. The protein resides in the cell membrane. The catalysed reaction is pyridoxal 5'-phosphate + H2O = pyridoxal + phosphate. It carries out the reaction pyridoxine 5'-phosphate + H2O = pyridoxine + phosphate. The enzyme catalyses pyridoxamine + phosphate = pyridoxamine 5'-phosphate + H2O. It catalyses the reaction O-phospho-L-seryl-[protein] + H2O = L-seryl-[protein] + phosphate. Inhibited by beryllium trifluoride. Functionally, functions as a pyridoxal phosphate (PLP) phosphatase, which also catalyzes the dephosphorylation of pyridoxine 5'-phosphate (PNP) and pyridoxamine 5'-phosphate (PMP), with order of substrate preference PLP &gt; PNP &gt; PMP and therefore plays a role in vitamin B6 metabolism. Also functions as a protein serine phosphatase that specifically dephosphorylates 'Ser-3' in proteins of the actin-depolymerizing factor (ADF)/cofilin family like CFL1 and DSTN. Thereby, regulates cofilin-dependent actin cytoskeleton reorganization, being required for normal progress through mitosis and normal cytokinesis. Does not dephosphorylate phosphothreonines in LIMK1. Does not dephosphorylate peptides containing phosphotyrosine. In Mus musculus (Mouse), this protein is Chronophin.